A 166-amino-acid polypeptide reads, in one-letter code: Mitochondrial translation release factor in rescue (166 aa).

The N-terminal 35 residues, 1 to 35 (MSTVGLFHFPTPLTRICPAPWGLRLWEKLTLLSPG), are a transit peptide targeting the mitochondrion. The interval 57–121 (ENELEEQFVK…LQEKVDVFYN (65 aa)) is GGQ domain. The GGQ motif lies at 71 to 73 (GGQ). An N5-methylglutamine modification is found at glutamine 73. Positions 122-148 (GENSPVHKEKREAAKKKQERKKRAKET) are disordered. Over residues 126 to 137 (PVHKEKREAAKK) the composition is skewed to basic and acidic residues. The stretch at 127–160 (VHKEKREAAKKKQERKKRAKETLEKKKLLKELWE) forms a coiled coil.

This sequence belongs to the prokaryotic/mitochondrial release factor family. Interacts (via C-terminus) with MTRES1 (via S4 domain). Associates with mitoribosomal S39 large subunit, peptidyl tRNA and nascent chain. Methylation of glutamine in the GGQ triplet by HEMK1. In terms of tissue distribution, expressed in all areas of the brain tested.

It localises to the mitochondrion. Functionally, part of a mitoribosome-associated quality control pathway that prevents aberrant translation by responding to interruptions during elongation. As heterodimer with MTRES1, ejects the unfinished nascent chain and peptidyl transfer RNA (tRNA), respectively, from stalled ribosomes. Recruitment of mitoribosome biogenesis factors to these quality control intermediates suggests additional roles for MTRES1 and MTRF during mitoribosome rescue. This Homo sapiens (Human) protein is Mitochondrial translation release factor in rescue.